We begin with the raw amino-acid sequence, 329 residues long: 4-hydroxythreonine-4-phosphate dehydrogenase (329 aa).

Positions 136 and 137 each coordinate substrate. Residues His-166, His-211, and His-266 each contribute to the a divalent metal cation site. 3 residues coordinate substrate: Lys-274, Asn-283, and Arg-292.

Belongs to the PdxA family. As to quaternary structure, homodimer. It depends on Zn(2+) as a cofactor. Mg(2+) serves as cofactor. Requires Co(2+) as cofactor.

Its subcellular location is the cytoplasm. The enzyme catalyses 4-(phosphooxy)-L-threonine + NAD(+) = 3-amino-2-oxopropyl phosphate + CO2 + NADH. Its pathway is cofactor biosynthesis; pyridoxine 5'-phosphate biosynthesis; pyridoxine 5'-phosphate from D-erythrose 4-phosphate: step 4/5. Functionally, catalyzes the NAD(P)-dependent oxidation of 4-(phosphooxy)-L-threonine (HTP) into 2-amino-3-oxo-4-(phosphooxy)butyric acid which spontaneously decarboxylates to form 3-amino-2-oxopropyl phosphate (AHAP). This is 4-hydroxythreonine-4-phosphate dehydrogenase from Shigella flexneri serotype 5b (strain 8401).